A 269-amino-acid chain; its full sequence is Autophagy-related protein 5 (269 aa).

A Glycyl lysine isopeptide (Lys-Gly) (interchain with G-Cter in ATG12) cross-link involves residue Lys102.

This sequence belongs to the ATG5 family. As to quaternary structure, conjugated with ATG12. The ATG5-ATG12 conjugate forms a complex with several units of ATG16. The ATG12-ATG5 conjugate also associates with ATG3. Conjugated to ATG12; which is essential for autophagy. Conjugation with ATG12 involves ATG7 as an E1-like activating enzyme and ATG10 as an E2-like conjugating enzyme.

It localises to the preautophagosomal structure membrane. In terms of biological role, involved in cytoplasm to vacuole transport (Cvt) and autophagic vesicle formation. Autophagy is essential for maintenance of amino acid levels and protein synthesis under nitrogen starvation. Required for selective autophagic degradation of the nucleus (nucleophagy). Also required for mitophagy, which eliminates defective or superfluous mitochondria in order to fulfill cellular energy requirements and prevent excess ROS production. Conjugation with ATG12, through a ubiquitin-like conjugating system involving ATG7 as an E1-like activating enzyme and ATG10 as an E2-like conjugating enzyme, is essential for its function. The ATG12-ATG5 conjugate acts as an E3-like enzyme which is required for lipidation of ATG8 and ATG8 association to the vesicle membranes. ATG12-ATG5 rearranges the ATG3 catalytic center and enhances its E2 activity. Required for proper vegetative growth, asexual/sexual reproduction, but, unlike several plant and animal pathogenic fungi, where ATG5 is required for infection, in B.bassiana it is dispensable for pathogenesis. The chain is Autophagy-related protein 5 from Beauveria bassiana (strain ARSEF 2860) (White muscardine disease fungus).